A 158-amino-acid chain; its full sequence is Methylglyoxal synthase (158 aa).

Positions M1–E158 constitute an MGS-like domain. Substrate-binding positions include H12, K16, T38 to T41, and S63 to G64. D69 serves as the catalytic Proton donor/acceptor. Position 96 (H96) interacts with substrate.

This sequence belongs to the methylglyoxal synthase family.

It catalyses the reaction dihydroxyacetone phosphate = methylglyoxal + phosphate. Its function is as follows. Catalyzes the formation of methylglyoxal from dihydroxyacetone phosphate. This is Methylglyoxal synthase from Treponema socranskii.